The following is a 485-amino-acid chain: MATTTSKTNTGYVTQVIGPVLDVSFPNGQLPKIYNAITVKGKNEAGQDITVTCEVQQLLGDNQVRAVSMSTTDGILRGMEVTDSGAAISVPVGTPTLGRIFNVLGEPVDELGAVVCDSTLPIHRPSPAFTQLETKSSIFETGIKVVDLLAPYRRGGKIGLFGGAGVGKTVLIMELINNIAKAHGGVSVFGGVGERTREGNDLYQEMKESKVIDENNLPASKVALVYGQMNEPPGARMRVALTALTMAEYFRDVNNQDVLLFIDNIFRFVQAGSEVSALLGRMPSAVGYQPTLGTEMGSLQERITSTTKGSITSIQAVYVPADDLTDPAPATTFAHLDATTVLSRNLAAKGIYPAVDPLDSTSTMLQPGIVGEKHYACAQRVKGILQRYKELQDIISILGLDELSEDDRLAVARARRVERFLSQPFFVAEVFTGSPGKYVSLEDTIKGFTMILDGELDELPEQSFYLVGDIQEAISKGQKLLAEAK.

Residue 162–169 (GGAGVGKT) coordinates ATP.

The protein belongs to the ATPase alpha/beta chains family. F-type ATPases have 2 components, CF(1) - the catalytic core - and CF(0) - the membrane proton channel. CF(1) has five subunits: alpha(3), beta(3), gamma(1), delta(1), epsilon(1). CF(0) has four main subunits: a(1), b(1), b'(1) and c(9-12).

The protein localises to the plastid. It is found in the cyanelle thylakoid membrane. The catalysed reaction is ATP + H2O + 4 H(+)(in) = ADP + phosphate + 5 H(+)(out). In terms of biological role, produces ATP from ADP in the presence of a proton gradient across the membrane. The catalytic sites are hosted primarily by the beta subunits. This chain is ATP synthase subunit beta, cyanelle, found in Cyanophora paradoxa.